The following is a 139-amino-acid chain: Small ribosomal subunit protein uS11 (139 aa).

The disordered stretch occupies residues 117 to 139 (VEDVTPIPHDGTRPKGGRRGRRV).

This sequence belongs to the universal ribosomal protein uS11 family. Part of the 30S ribosomal subunit.

Its function is as follows. Located on the platform of the 30S subunit. The chain is Small ribosomal subunit protein uS11 from Thermococcus onnurineus (strain NA1).